Reading from the N-terminus, the 110-residue chain is MASNLLKALIRSQILPSSRRNFSVATTQLGIPTDDLVGNHTAKWMQDRSKKSPMELISEVPPIKVDGRIVACEGDTNPALGHPIEFICLDLNEPAICKYCGLRYVQDHHH.

A mitochondrion-targeting transit peptide spans 1–22 (MASNLLKALIRSQILPSSRRNF).

Belongs to the complex I NDUFS6 subunit family. Complex I is composed of at least 49 different subunits. This is a component of the iron-sulfur (IP) fragment of the enzyme.

It is found in the mitochondrion inner membrane. In terms of biological role, accessory subunit of the mitochondrial membrane respiratory chain NADH dehydrogenase (Complex I), that is believed not to be involved in catalysis. Complex I functions in the transfer of electrons from NADH to the respiratory chain. The immediate electron acceptor for the enzyme is believed to be ubiquinone. The chain is NADH dehydrogenase [ubiquinone] iron-sulfur protein 6, mitochondrial from Arabidopsis thaliana (Mouse-ear cress).